Consider the following 413-residue polypeptide: MKLIKAVRGTKDIIGEEAKKYIYISNVAQKMFENYGYNFVKTPIFEETELFKRGIGEATDVVEKEMYTFKDRGDRSITLRPENTASLVRCYLENAIYAKEEISRFYYNGSMFRYERPQAGRQREFNQIGLEVFGEKSPKVDAEVIAIGYKFLEKLGITDLEVKINSVGSKASRTVYREKLIEHFKSHLDDMCEDCRDRINRNPLRLLDCKVDGEKDFYKSAPSIIDYLFEDERKHYDDVKKYLDIFGIKYTEDPTLVRGLDYYSSTVFEIVTNKLGSQGTVLGGGRYDNLLKELGDKDIPAVGFATGVERIMMLLEENYPKNTPDVYIAWLGENTSETALKIAESLRDNDIKVYIDYSEKGMKSHMKKADKLETRYCVILGEDEFNKGIVLLKDFSTREQKEIKIEEIINYIK.

The protein belongs to the class-II aminoacyl-tRNA synthetase family. As to quaternary structure, homodimer.

It is found in the cytoplasm. The enzyme catalyses tRNA(His) + L-histidine + ATP = L-histidyl-tRNA(His) + AMP + diphosphate + H(+). The chain is Histidine--tRNA ligase from Fusobacterium nucleatum subsp. nucleatum (strain ATCC 25586 / DSM 15643 / BCRC 10681 / CIP 101130 / JCM 8532 / KCTC 2640 / LMG 13131 / VPI 4355).